Here is an 88-residue protein sequence, read N- to C-terminus: U-scoloptoxin(01)-Tl1a (88 aa).

A signal peptide spans methionine 1–alanine 16. The Chitin-binding type-2 domain occupies glycine 25–arginine 81. A disulfide bond links cysteine 58 and cysteine 71.

Belongs to the scoloptoxin-01 family. Post-translationally, contains 3 disulfide bonds. In terms of tissue distribution, expressed by the venom gland.

The protein resides in the secreted. This is U-scoloptoxin(01)-Tl1a from Thereuopoda longicornis (Long-legged centipede).